The primary structure comprises 262 residues: Transmembrane protein 81 (262 aa).

The N-terminal stretch at 1–30 is a signal peptide; sequence MKAVATVFICGSLVLITYLPLVVTSPQTLA. Topologically, residues 31 to 225 are extracellular; that stretch reads IPEKLRQAVG…HLPGWRKKVS (195 aa). The N-linked (GlcNAc...) asparagine glycan is linked to N45. Positions 83-171 constitute an Ig-like domain; that stretch reads TNWICGMLHF…VQQLKNLKLV (89 aa). A disulfide bond links C104 and C160. N211 is a glycosylation site (N-linked (GlcNAc...) asparagine). Residues 226-246 traverse the membrane as a helical segment; it reads LALGVGIAAGVVGGVLVNVAL. The Cytoplasmic portion of the chain corresponds to 247 to 262; the sequence is CRVLGGTGGNGNLSSL.

In terms of assembly, forms a complex with IZUMO1 and SPACA6 on spermatocyte cell membrane required for fertilization.

Its subcellular location is the cell membrane. Functionally, essential fertilization factor required for male fertility. Part of a conserved trimeric sperm complex with the essential fertilization factors IZUMO1 and SPACA6 which bridges sperm and oocyte membranes during fertilization by binding to IZUMO1R/JUNO on the oocyte. The protein is Transmembrane protein 81 (Tmem81) of Rattus norvegicus (Rat).